Consider the following 490-residue polypeptide: MSLFDKRLSEIHSALRAKEISVTDLVQASIASIKEHDGEIKSVLHVDEEGALAHARQLDERLVKGNEELGLLYGLPAGLKDNLVTKDIRTTCASKFLANYDPVHDGTVSKKVKDADSVIVAKLNMDEFAMGGSNENSGFFPAKNPWNTDYVPGGSSGGSAAAMAARHFYYTLGSDTGGSIRQPAAFCGVVGLKPTYGRVSRFGLVAFASSLDQIGPVTKNVEDSAYVLQAIAGHDEYDSTSANVDVPNYLSALTGDVKGLRIGVPKELIGEGIDPEVRDAVLAALKQLESMGATWSEVSMPHTEYAVPAYYLLSSSEASSNLARFDGVRYGVRADNAANLIELYKESRSQGFGQEVKRRIMLGTYALSSGYYDAYYKKAQQVRTLIIQDFNSIFADYDVILHPTTPSTAFKVGENVDDPVKMYLEDICTVPVNLAGLPAISVPCGFSKNGLPIGLQIVGRAFDESTVLRVAHAYEQTAGFYGRKPEWVRG.

Catalysis depends on charge relay system residues lysine 80 and serine 155. Catalysis depends on serine 179, which acts as the Acyl-ester intermediate.

It belongs to the amidase family. GatA subfamily. Heterotrimer of A, B and C subunits.

It catalyses the reaction L-glutamyl-tRNA(Gln) + L-glutamine + ATP + H2O = L-glutaminyl-tRNA(Gln) + L-glutamate + ADP + phosphate + H(+). In terms of biological role, allows the formation of correctly charged Gln-tRNA(Gln) through the transamidation of misacylated Glu-tRNA(Gln) in organisms which lack glutaminyl-tRNA synthetase. The reaction takes place in the presence of glutamine and ATP through an activated gamma-phospho-Glu-tRNA(Gln). The chain is Glutamyl-tRNA(Gln) amidotransferase subunit A from Brevibacillus brevis (strain 47 / JCM 6285 / NBRC 100599).